A 358-amino-acid polypeptide reads, in one-letter code: C-C chemokine receptor type 3 (358 aa).

At 1–43 (MATYPEEAELETEFPGTTFYDYEFAQPCFKVSITDLGAQFLPS) the chain is on the extracellular side. A helical transmembrane segment spans residues 44–64 (LFSLVFIVGLLGNITVIVVLT). Topologically, residues 65-74 (KYQKLKIMTN) are cytoplasmic. The helical transmembrane segment at 75-95 (IYLLNLAISDLLFLFTLPFWT) threads the bilayer. The Extracellular portion of the chain corresponds to 96–112 (YYVHWNKWVFGHFMCKI). The chain crosses the membrane as a helical span at residues 113 to 133 (ISGLYYVGLFSEIFFIILLTI). The Cytoplasmic portion of the chain corresponds to 134–154 (DRYLAIVHAVFALRTRTVTFG). A helical transmembrane segment spans residues 155 to 175 (IITSVITWVLAVLAALPEFMF). Residues 176 to 206 (YGTQGHFEVLFCGPSYPEKKEHHWKRFQALR) are Extracellular-facing. The helical transmembrane segment at 207 to 227 (MNIFGLALPLLIMIICYTGII) threads the bilayer. Residues 228–243 (KTLLRCPSKKKYKAIR) are Cytoplasmic-facing. Residues 244–264 (LIFVIMVVFFVFWTPYNLLLL) form a helical membrane-spanning segment. Residues 265-287 (FSAFDLSFLDDCERSKQLDMAKH) lie on the Extracellular side of the membrane. A helical membrane pass occupies residues 288-308 (VTEVIAHTHCCINPIIYAFVG). The Cytoplasmic segment spans residues 309 to 358 (ERFQKYLRHFLHRNVTMHLSKYIPFFTSEKLERSSSISPSSGDPELSVVF).

It belongs to the G-protein coupled receptor 1 family.

It localises to the cell membrane. Functionally, receptor for C-C type chemokine. Binds and responds to a variety of chemokines, including CCL11, CCL26, CCL7, CCL13, RANTES(CCL5) and CCL15. Subsequently transduces a signal by increasing the intracellular calcium ions level. In addition acts as a possible functional receptor for NARS1. This is C-C chemokine receptor type 3 (CCR3) from Cavia porcellus (Guinea pig).